A 729-amino-acid polypeptide reads, in one-letter code: Neurochondrin (729 aa).

Ser-2 bears the N-acetylserine mark. At Ser-2 the chain carries Phosphoserine. Residues Cys-3 and Cys-4 are each lipidated (S-palmitoyl cysteine). Position 75 is an asymmetric dimethylarginine (Arg-75). The residue at position 448 (Ser-448) is a Phosphoserine.

This sequence belongs to the neurochondrin family. As to quaternary structure, interacts with MCHR1. Interacts with SEMA4C. Interacts with DIAPH1 (via FH3 domain). Interacts with GRM5. Post-translationally, palmitoylated. Palmitoylation by ZDHHC1, ZDHHC3 and ZDHHC11 regulates the association of NCDN with endosome membranes. May also be palmitoylated by ZDHHC7. As to expression, expressed in the neuronal, chondral and bone tissues. Expressed in dendrites. Enriched in the brain in the surface layer I-IV. In brains, protein level increases in male but decreases in female with advancing age (at protein level). In adult brains, it is highly expressed in the forebrain and hindbrain. Highly expressed in the hippocampus, piriform cortex, septum, amygdaloid complex, medial geniculate nucleus, inferior colliculus, cerebellar nuclei and the nuclei of the Vth, VIIth, and XIIth cranial nerves. In bone tissues, it is expressed in osteoblasts and osteocytes.

It localises to the cytoplasm. The protein localises to the cytosol. The protein resides in the endosome membrane. Its subcellular location is the cell projection. It is found in the dendrite. It localises to the postsynapse. Probably involved in signal transduction, in the nervous system, via increasing cell surface localization of GRM5 and positively regulating its signaling. Required for the spatial learning process. Acts as a negative regulator of Ca(2+)-calmodulin-dependent protein kinase 2 (CaMK2) phosphorylation. May play a role in modulating melanin-concentrating hormone-mediated functions via its interaction with MCHR1 that interferes with G protein-coupled signal transduction. May be involved in bone metabolism. May also be involved in neurite outgrowth. This is Neurochondrin (Ncdn) from Mus musculus (Mouse).